A 509-amino-acid chain; its full sequence is Cytochrome P450 6A1 (509 aa).

Cys-449 is a heme binding site.

Belongs to the cytochrome P450 family. Heme is required as a cofactor.

The protein resides in the endoplasmic reticulum membrane. It localises to the microsome membrane. The catalysed reaction is an organic molecule + reduced [NADPH--hemoprotein reductase] + O2 = an alcohol + oxidized [NADPH--hemoprotein reductase] + H2O + H(+). In terms of biological role, involved in the metabolism of insect hormones and in the breakdown of synthetic insecticides. This Musca domestica (House fly) protein is Cytochrome P450 6A1 (CYP6A1).